The primary structure comprises 129 residues: MAKPAARPRKKIKKTVVDGIAHIHASFNNTIVTITDRQGNALSWATSGGSGFRGSRKSTPFAAQVAAERAGQAALEYGLKNLDVNVKGPGPGRESAVRALNGCGYKIASITDVTPIPHNGCRPPKKRRV.

Belongs to the universal ribosomal protein uS11 family. In terms of assembly, part of the 30S ribosomal subunit. Interacts with proteins S7 and S18. Binds to IF-3.

In terms of biological role, located on the platform of the 30S subunit, it bridges several disparate RNA helices of the 16S rRNA. Forms part of the Shine-Dalgarno cleft in the 70S ribosome. The chain is Small ribosomal subunit protein uS11 from Pseudomonas fluorescens (strain ATCC BAA-477 / NRRL B-23932 / Pf-5).